The primary structure comprises 744 residues: MPEDQAGAAMEEASPYSLLDICLNFLTTHLEKFCSARQDGTLCLQEPGVFPQEVADRLLRTMAFHGLLNDGTVGIFRGNQMRLKRACIRKAKISAVAFRKAFCHHKLVELDATGVNADITITDIISGLGSNKWIQQNLQCLVLNSLTLSLEDPYERCFSRLSGLRALSITNVLFYNEDLAEVASLPRLESLDISNTSITDITALLACKDRLKSLTMHHLKCLKMTTTQILDVVRELKHLNHLDISDDKQFTSDIALRLLEQKDILPNLVSLDVSGRKHVTDKAVEAFIQQRPSMQFVGLLATDAGYSEFLTGEGHLKVSGEANETQIAEALKRYSERAFFVREALFHLFSLTHVMEKTKPEILKLVVTGMRNHPMNLPVQLAASACVFNLTKQDLAAGMPVRLLADVTHLLLKAMEHFPNHQQLQKNCLLSLCSDRILQDVPFNRFEAAKLVMQWLCNHEDQNMQRMAVAIISILAAKLSTEQTAQLGTELFIVRQLLQIVKQKTNQNSVDTTLKFTLSALWNLTDESPTTCRHFIENQGLELFMRVLESFPTESSIQQKVLGLLNNIAEVQELHSELMWKDFIDHISSLLHSVEVEVSYFAAGIIAHLISRGEQAWTLSRSQRNSLLDDLHSAILKWPTPECEMVAYRSFNPFFPLLGCFTTPGVQLWAVWAMQHVCSKNPSRYCSMLIEEGGLQHLYNIKDHEHTDPHVQQIAVAILDSLEKHIVRHGRPPPCKKQPQARLN.

LRR repeat units follow at residues leucine 185–lysine 208, methionine 216–leucine 236, and lysine 237–glutamine 261.

The protein belongs to the zyg-11 family. In terms of assembly, (Microbial infection) Interacts with SARS-COV-2 protein ORF10. As to quaternary structure, interacts with ELOC/Elongin C. Part of an E3 ubiquitin ligase complex including ZYG11B, CUL2 and Elongin BC. (Microbial infection) Ubiquitinated; leading to proteasomal degradation in the presence of herpes simplex virus 1/HHV-1.

Its subcellular location is the cytoplasm. Its function is as follows. Serves as substrate adapter subunit in the E3 ubiquitin ligase complex ZYG11B-CUL2-Elongin BC. Acts to target substrates bearing N-terminal degrons for proteasomal degradation with the first four residues of substrates being the key recognition elements. Prefers Nt-Gly but also has the capacity to recognize Nt-Ser, -Ala and -Cys. Involved in the clearance of proteolytic fragments generated by caspase cleavage during apoptosis since N-terminal glycine degrons are strongly enriched at caspase cleavage sites. Also important in the quality control of protein N-myristoylation in which N-terminal glycine degrons are conditionally exposed after a failure of N-myristoylation. In addition, plays a role in the amplification of cGAS to enhance innate immune response. Mechanistically, strengthens the processes of cGAS binding with dsDNA and assembling oligomers and also accelerates and stabilizes cGAS-DNA condensation, thereby enhancing production of antiviral IFNs and inflammatory cytokines. This Homo sapiens (Human) protein is Protein zyg-11 homolog B.